The following is a 170-amino-acid chain: Cathelicidin antimicrobial peptide (170 aa).

The N-terminal stretch at 1–30 (MKTQMDGHSLGRWSLVLLLLGLVMPLAIVA) is a signal peptide. A propeptide spans 31–131 (QVLSYKEAVL…DISCDKDNRR (101 aa)) (cathelin-like domain (CLD)). Cystine bridges form between cysteine 86/cysteine 97 and cysteine 108/cysteine 125. Residues 150-162 (FKRIVQRIKDFLR) form an active core region.

It belongs to the cathelicidin family. As to quaternary structure, monomer, homodimer or homotrimer (in vitro). Oligomerizes as tetra- or hexamer in solution (in vitro). Proteolytically cleaved by proteinase PRTN3 into antibacterial peptide LL-37. Proteolytically cleaved by cathepsin CTSG and neutrophil elastase ELANE. In terms of processing, resistant to proteolytic degradation in solution, and when bound to both zwitterionic (mimicking mammalian membranes) and negatively charged membranes (mimicking bacterial membranes). Post-translationally, after secretion onto the skin surface, the CAMP gene product is processed by a serine protease-dependent mechanism into multiple novel antimicrobial peptides distinct from and shorter than cathelicidin LL-37. These peptides show enhanced antimicrobial action, acquiring the ability to kill skin pathogens such as S.aureus, E.coli and C.albicans. These peptides have lost the ability to stimulate CXCL8/IL8 release from keratinocytes. The peptides act synergistically, killing bacteria at lower concentrations when present together, and maintain activity at increased salt condition.

The protein localises to the secreted. Its subcellular location is the vesicle. Functionally, antimicrobial protein that is an integral component of the innate immune system. Binds to bacterial lipopolysaccharides (LPS). Acts via neutrophil N-formyl peptide receptors to enhance the release of CXCL2. Postsecretory processing generates multiple cathelicidin antimicrobial peptides with various lengths which act as a topical antimicrobial defense in sweat on skin. The unprocessed precursor form, cathelicidin antimicrobial peptide, inhibits the growth of Gram-negative E.coli and E.aerogenes with efficiencies comparable to that of the mature peptide LL-37 (in vitro). In terms of biological role, antimicrobial peptide that is an integral component of the innate immune system. Binds to bacterial lipopolysaccharides (LPS). Causes membrane permeabilization by forming transmembrane pores (in vitro). Causes lysis of E.coli. Exhibits antimicrobial activity against Gram-negative bacteria such as P.aeruginosa, S.typhimurium, E.aerogenes, E.coli and P.syringae, Gram-positive bacteria such as L.monocytogenes, S.epidermidis, S.pyogenes and S.aureus, as well as vancomycin-resistant enterococci (in vitro). Exhibits antimicrobial activity against methicillin-resistant S.aureus, P.mirabilis, and C.albicans in low-salt media, but not in media containing 100 mM NaCl (in vitro). Forms chiral supramolecular assemblies with quinolone signal (PQS) molecules of P.aeruginosa, which may lead to interference of bacterial quorum signaling and perturbance of bacterial biofilm formation. May form supramolecular fiber-like assemblies on bacterial membranes. Induces cytokine and chemokine producation as well as TNF/TNFA and CSF2/GMCSF production in normal human keratinocytes. Exhibits hemolytic activity against red blood cells. Exhibits antimicrobial activity against E.coli and B.megaterium (in vitro). This chain is Cathelicidin antimicrobial peptide, found in Pongo pygmaeus (Bornean orangutan).